Consider the following 151-residue polypeptide: Large ribosomal subunit protein uL13 (151 aa).

The interval 126 to 151 (YPGSNHPHEAQKPEKLTIQTIPGGER) is disordered. The span at 131-140 (HPHEAQKPEK) shows a compositional bias: basic and acidic residues.

This sequence belongs to the universal ribosomal protein uL13 family. As to quaternary structure, part of the 50S ribosomal subunit.

Functionally, this protein is one of the early assembly proteins of the 50S ribosomal subunit, although it is not seen to bind rRNA by itself. It is important during the early stages of 50S assembly. The polypeptide is Large ribosomal subunit protein uL13 (Trichodesmium erythraeum (strain IMS101)).